The primary structure comprises 269 residues: Surfeit locus protein 4 (269 aa).

The next 6 helical transmembrane spans lie at 64-84 (FLAS…CILV), 92-112 (YACF…SILW), 157-177 (MQLG…HFDM), 179-199 (FFYI…AIGF), 203-223 (LAAL…NAFW), and 242-262 (TMSV…GVSM). Residues 266–269 (KKEW) carry the Di-lysine motif motif.

It belongs to the SURF4 family.

The protein localises to the endoplasmic reticulum membrane. It is found in the endoplasmic reticulum-Golgi intermediate compartment membrane. It localises to the golgi apparatus membrane. In terms of biological role, endoplasmic reticulum cargo receptor that mediates the export of lipoproteins by recruiting cargos into COPII vesicles to facilitate their secretion. Acts as a cargo receptor for lipoproteins bearing both APOB and APOA1, thereby regulating lipoprotein delivery and the maintenance of lipid homeostasis. This chain is Surfeit locus protein 4, found in Gallus gallus (Chicken).